A 231-amino-acid chain; its full sequence is PX domain-containing protein 1 (231 aa).

The 134-residue stretch at 1 to 134 (MASAVFEGTS…TFFERSPLDQ (134 aa)) folds into the PX domain.

The chain is PX domain-containing protein 1 (PXDC1) from Bos taurus (Bovine).